Here is a 416-residue protein sequence, read N- to C-terminus: D-amino acid dehydrogenase (416 aa).

3 to 17 is a binding site for FAD; that stretch reads VIVLGAGIVGVTSAY.

It belongs to the DadA oxidoreductase family. FAD is required as a cofactor.

It catalyses the reaction a D-alpha-amino acid + A + H2O = a 2-oxocarboxylate + AH2 + NH4(+). The protein operates within amino-acid degradation; D-alanine degradation; NH(3) and pyruvate from D-alanine: step 1/1. In terms of biological role, oxidative deamination of D-amino acids. In Rhizobium johnstonii (strain DSM 114642 / LMG 32736 / 3841) (Rhizobium leguminosarum bv. viciae), this protein is D-amino acid dehydrogenase.